A 137-amino-acid chain; its full sequence is Protein apnoia (137 aa).

3 consecutive transmembrane segments (helical) span residues 7–27 (IVFA…QQQA), 55–75 (LVPG…LTVV), and 76–96 (SIKG…QMLS).

Interacts with crb.

It localises to the apical cell membrane. In terms of biological role, transmembrane protein that plays a key role in trachea development by regulating crb localization and maintenance at the apical cell membrane. Required for anisotropic apical surface expansion important for tracheal tube elongation and lumen stability at larval stages. The polypeptide is Protein apnoia (Drosophila melanogaster (Fruit fly)).